The following is a 281-amino-acid chain: Ribosomal RNA small subunit methyltransferase A (281 aa).

Residues asparagine 24, leucine 26, glycine 51, glutamate 72, aspartate 96, and asparagine 123 each contribute to the S-adenosyl-L-methionine site.

The protein belongs to the class I-like SAM-binding methyltransferase superfamily. rRNA adenine N(6)-methyltransferase family. RsmA subfamily.

It is found in the cytoplasm. It carries out the reaction adenosine(1518)/adenosine(1519) in 16S rRNA + 4 S-adenosyl-L-methionine = N(6)-dimethyladenosine(1518)/N(6)-dimethyladenosine(1519) in 16S rRNA + 4 S-adenosyl-L-homocysteine + 4 H(+). Its function is as follows. Specifically dimethylates two adjacent adenosines (A1518 and A1519) in the loop of a conserved hairpin near the 3'-end of 16S rRNA in the 30S particle. May play a critical role in biogenesis of 30S subunits. The sequence is that of Ribosomal RNA small subunit methyltransferase A from Ureaplasma urealyticum serovar 10 (strain ATCC 33699 / Western).